The following is a 509-amino-acid chain: Heat shock 70 kDa protein 14 (509 aa).

This sequence belongs to the heat shock protein 70 family. In terms of assembly, component of ribosome-associated complex (RAC), a heterodimer composed of Hsp70/DnaK-type chaperone HSPA14 and Hsp40/DnaJ-type chaperone DNAJC2.

The protein localises to the cytoplasm. It is found in the cytosol. Functionally, component of the ribosome-associated complex (RAC), a complex involved in folding or maintaining nascent polypeptides in a folding-competent state. In the RAC complex, binds to the nascent polypeptide chain, while DNAJC2 stimulates its ATPase activity. The polypeptide is Heat shock 70 kDa protein 14 (HSPA14) (Macaca fascicularis (Crab-eating macaque)).